The primary structure comprises 213 residues: Probable GTP-binding protein EngB (213 aa).

Residues 25 to 203 (EGTEVAFAGR…EDVLNGWLLP (179 aa)) enclose the EngB-type G domain. GTP contacts are provided by residues 33–40 (GRSNAGKS), 60–64 (GRTQL), 80–83 (DLPG), 147–150 (TKAD), and 179–184 (AQMFSA). The Mg(2+) site is built by Ser40 and Thr62.

The protein belongs to the TRAFAC class TrmE-Era-EngA-EngB-Septin-like GTPase superfamily. EngB GTPase family. Mg(2+) is required as a cofactor.

Necessary for normal cell division and for the maintenance of normal septation. The chain is Probable GTP-binding protein EngB from Saccharophagus degradans (strain 2-40 / ATCC 43961 / DSM 17024).